The sequence spans 216 residues: MOB kinase activator-like 1 homolog B (216 aa).

Zn(2+)-binding residues include cysteine 79, cysteine 84, histidine 161, and histidine 166.

This sequence belongs to the MOB1/phocein family.

The polypeptide is MOB kinase activator-like 1 homolog B (mobB) (Dictyostelium discoideum (Social amoeba)).